An 85-amino-acid chain; its full sequence is U4-theraphotoxin-Hhn1a (85 aa).

A signal peptide spans 1-22; that stretch reads MKVTLIVILTCAAVLVLHTTAA. A propeptide spanning residues 23-48 is cleaved from the precursor; that stretch reads EELEAESQLMEVGMPDTELAAVDEER. 3 disulfide bridges follow: cysteine 52/cysteine 66, cysteine 56/cysteine 77, and cysteine 71/cysteine 82.

It belongs to the neurotoxin 12 (Hwtx-2) family. 02 (Hwtx-2) subfamily. In terms of assembly, monomer. In terms of tissue distribution, expressed by the venom gland.

Its subcellular location is the secreted. In terms of biological role, neurotoxin active on both insects and mammals. This is U4-theraphotoxin-Hhn1a from Cyriopagopus hainanus (Chinese bird spider).